A 274-amino-acid chain; its full sequence is MRKLTLLPLLLIITGLLTVQAAELHFQVFIKGYNGTAELGIFGENLSKVETVKNGSIISLPAGNYTLTLFALNKTFVKDLRLDSNKTVTFNLLFTNRTENLSMMRHAIVQPSLEVFEIVLITNSGGENFEGDLAIPLPEHTGLKISDSSLSFLDFSDLNGNLTLKKLIVPANSTGEVSITYRLVKPKLSLSGAENQTVLIFTTLPVTNQSNAAYRGVQQFKGVDYSVYQCKTKCVLEFKVEPEIKIDKTSAFVILTASALIFIYLFTKRGGWEK.

Positions 1 to 21 are cleaved as a signal peptide; that stretch reads MRKLTLLPLLLIITGLLTVQA. A helical membrane pass occupies residues 249 to 266; the sequence is TSAFVILTASALIFIYLF.

It localises to the membrane. This is an uncharacterized protein from Archaeoglobus fulgidus (strain ATCC 49558 / DSM 4304 / JCM 9628 / NBRC 100126 / VC-16).